The following is a 170-amino-acid chain: Small ribosomal subunit protein uS5 (170 aa).

One can recognise an S5 DRBM domain in the interval 13-76 (LLEKLVGVRR…ENARKNMISV (64 aa)).

It belongs to the universal ribosomal protein uS5 family. As to quaternary structure, part of the 30S ribosomal subunit. Contacts proteins S4 and S8.

Functionally, with S4 and S12 plays an important role in translational accuracy. Located at the back of the 30S subunit body where it stabilizes the conformation of the head with respect to the body. The chain is Small ribosomal subunit protein uS5 from Nitrosococcus oceani (strain ATCC 19707 / BCRC 17464 / JCM 30415 / NCIMB 11848 / C-107).